Reading from the N-terminus, the 474-residue chain is Type I restriction enzyme EcoBI specificity subunit (474 aa).

Belongs to the type-I restriction system S methylase family. As to quaternary structure, the type I restriction/modification system is composed of three polypeptides R, M and S. The restriction enzyme has stoichiometry R(2)M(2)S(1) while the methyltransferase is M(2)S(1).

In terms of biological role, the specificity (S) subunit of a type I restriction enzyme; this subunit dictates DNA sequence specificity. The M and S subunits together form a methyltransferase (MTase) that methylates A-3 on the top strand and A-4 on the bottom strand of the sequence 5'-TGAN(8)TGCT-3'. In the presence of the R subunit the complex can also act as an endonuclease, binding to the same target sequence but cutting the DNA some distance from this site. Whether the DNA is cut or modified depends on the methylation state of the target sequence. When the target site is unmodified, the DNA is cut. When the target site is hemimethylated, the complex acts as a maintenance MTase modifying the DNA so that both strands become methylated. After locating a non-methylated recognition site, the enzyme complex serves as a molecular motor that translocates DNA in an ATP-dependent manner until a collision occurs that triggers cleavage. The sequence is that of Type I restriction enzyme EcoBI specificity subunit from Escherichia coli.